A 644-amino-acid polypeptide reads, in one-letter code: Sodium/hydrogen exchanger 9 (644 aa).

Topologically, residues 1–20 are lumenal; that stretch reads MAGQLRFTSGKDEDHFQHQG. Residues 21–41 traverse the membrane as a helical segment; the sequence is AVELLAFNFLLILTILTIWLF. Topologically, residues 42–45 are cytoplasmic; that stretch reads KNHR. The chain crosses the membrane as a helical span at residues 46–66; it reads FRFLHETGGAMVYGLIMGLIL. The Lumenal segment spans residues 67-126; sequence RYATAPTDIDSGTVYNCGNLFFSPSTLLVNITDQVYEYKYQREINQHNISPHQGNAILEK. Residues 127–147 form a helical membrane-spanning segment; the sequence is MTFDPEIFFNVLLPPIIFHAG. The Cytoplasmic portion of the chain corresponds to 148–164; that stretch reads YSLKKRHFFQNLGSILT. The chain crosses the membrane as a helical span at residues 165–185; it reads YAFLGTAISCVVIGLIMYGFV. At 186–203 the chain is on the lumenal side; the sequence is KAMVHAGQLKSGDFHFTD. Residues 204–224 traverse the membrane as a helical segment; it reads CLFFGSLMSATDPVTVLAIFH. The Cytoplasmic portion of the chain corresponds to 225-235; it reads ELHVDPDLYTL. Residues 236-256 form a helical membrane-spanning segment; sequence LFGESVLNDAVAIVLTYSISI. Topologically, residues 257–277 are lumenal; the sequence is YSPKENPNAFDTAAFFQSVGN. The helical transmembrane segment at 278-298 threads the bilayer; that stretch reads FLGIFAGSFAMGSAYAVVTAL. Residues 299–309 are Cytoplasmic-facing; sequence LTKFTKLREFP. The chain crosses the membrane as a helical span at residues 310 to 327; that stretch reads MLETGLFFLLSWSAFLSA. Topologically, residues 328–333 are lumenal; it reads EAAGLT. The chain crosses the membrane as a helical span at residues 334–350; sequence GIVAVLFCGVTQAHYTY. The Cytoplasmic segment spans residues 351 to 364; it reads NNLSSDSKLRTKQL. The helical transmembrane segment at 365–385 threads the bilayer; it reads FEFMNFLAENVIFCYMGLALF. Position 386 (Thr-386) is a topological domain, lumenal. Residues 387 to 407 traverse the membrane as a helical segment; that stretch reads FQNHIFNALFILGAFLAIFVA. Residues 408-429 are Cytoplasmic-facing; it reads RACNIYPLSFLLNLGRKQKIPW. The helical transmembrane segment at 430–450 threads the bilayer; that stretch reads NFQHMMMFSGLRGAIAFALAI. Topologically, residues 451 to 465 are lumenal; sequence RNTESQPKQMMFTTT. A helical transmembrane segment spans residues 466 to 486; the sequence is LLLVFFTVWVFGGGTTPMLTW. Residues 487-644 lie on the Cytoplasmic side of the membrane; that stretch reads LQIRVGVDLD…EQTRGQPQMD (158 aa). The tract at residues 590–644 is disordered; that stretch reads YQEQSPSPSSPTTKLALDQKSSGQTPGKENIYEGDLGLGGYDLKLEQTRGQPQMD.

This sequence belongs to the monovalent cation:proton antiporter 1 (CPA1) transporter (TC 2.A.36) family. As to quaternary structure, homodimer; phosphatidylinositol-4,5-bisphosphate (PIP2) and phosphatidylinositol 3,4,5-trisphosphate (PIP3) could be involved in the dimer stabilization. Interacts (via the C-terminus) with RACK1. Interacts with CHP1. As to expression, expressed in the brain. Highly expressed in immune cells, specifically macrophages.

Its subcellular location is the late endosome membrane. The protein localises to the cell membrane. The protein resides in the early endosome membrane. It is found in the recycling endosome membrane. It localises to the cytoplasmic vesicle. Its subcellular location is the phagosome membrane. The catalysed reaction is Na(+)(in) + H(+)(out) = Na(+)(out) + H(+)(in). It carries out the reaction K(+)(in) + H(+)(out) = K(+)(out) + H(+)(in). Its function is as follows. Endosomal Na(+), K(+)/H(+) antiporter. Mediates the electroneutral exchange of endosomal luminal H(+) for a cytosolic Na(+) or K(+). By facilitating proton efflux, SLC9A9 counteracts the acidity generated by vacuolar (V)-ATPase, thereby limiting luminal acidification. Regulates organellar pH and consequently, endosome maturation and endocytic trafficking of plasma membrane receptors and neurotransporters. Promotes the recycling of transferrin receptors back to the cell surface to facilitate additional iron uptake in the brain. Regulates synaptic transmission by regulating the luminal pH of axonal endosomes. Regulates phagosome lumenal pH, thus affecting phagosome maturation, and consequently, microbicidal activity in macrophages. Can also be active at the cell surface of specialized cells, e.g., in the inner ear hair bundles uses the high K(+) of the endolymph to regulate intracelular pH. In Mus musculus (Mouse), this protein is Sodium/hydrogen exchanger 9 (Slc9a9).